A 318-amino-acid chain; its full sequence is Bis(5'-nucleosyl)-tetraphosphatase, symmetrical (318 aa).

Positions 269 to 318 (PGREVTGPAPVARAPRRPRERLGRQRSRGNRGNAGNTAVPAKPQVDTPQD) are disordered. Residues 282–297 (APRRPRERLGRQRSRG) show a composition bias toward basic residues.

It belongs to the Ap4A hydrolase family.

The enzyme catalyses P(1),P(4)-bis(5'-adenosyl) tetraphosphate + H2O = 2 ADP + 2 H(+). Hydrolyzes diadenosine 5',5'''-P1,P4-tetraphosphate to yield ADP. The polypeptide is Bis(5'-nucleosyl)-tetraphosphatase, symmetrical (Xanthomonas oryzae pv. oryzae (strain KACC10331 / KXO85)).